A 363-amino-acid chain; its full sequence is Flagellar P-ring protein (363 aa).

The signal sequence occupies residues 1–20; sequence MKLKLILAVAMLAFSLPSQA.

It belongs to the FlgI family. In terms of assembly, the basal body constitutes a major portion of the flagellar organelle and consists of four rings (L,P,S, and M) mounted on a central rod.

It is found in the periplasm. The protein resides in the bacterial flagellum basal body. Its function is as follows. Assembles around the rod to form the L-ring and probably protects the motor/basal body from shearing forces during rotation. This is Flagellar P-ring protein from Shewanella sp. (strain MR-4).